Consider the following 526-residue polypeptide: Fumitremorgin C synthase (526 aa).

Residues 4 to 24 (LPLSPAVLFLTITLPILYFWI) traverse the membrane as a helical segment. C443 lines the heme pocket.

The protein belongs to the cytochrome P450 family. Requires heme as cofactor.

The protein localises to the membrane. The catalysed reaction is tryprostatin A + reduced [NADPH--hemoprotein reductase] + O2 = fumitremorgin C + oxidized [NADPH--hemoprotein reductase] + 2 H2O + H(+). It functions in the pathway mycotoxin biosynthesis. In terms of biological role, cytochrome P450 monooxygenase; part of the gene cluster that mediates the biosynthesis of fumitremorgins, indole alkaloids that carry not only intriguing chemical structures, but also interesting biological and pharmacological activities. The biosynthesis of fumitremorgin-type alkaloids begins by condensation of the two amino acids L-tryptophan and L-proline to brevianamide F, catalyzed by the non-ribosomal peptide synthetase ftmPS/ftmA. Brevianamide F is then prenylated by the prenyltransferase ftmPT1/ftmB in the presence of dimethylallyl diphosphate, resulting in the formation of tryprostatin B. The three cytochrome P450 monooxygenases, ftmP450-1/ftmC, ftmP450-2/ftmE and ftmP450-3/FtmG, are responsible for the conversion of tryprostatin B to 6-hydroxytryprostatin B, tryprostatin A to fumitremorgin C and fumitremorgin C to 12,13-dihydroxyfumitremorgin C, respectively. The putative methyltransferase ftmMT/ftmD is expected for the conversion of 6-hydroxytryprostatin B to tryprostatin A. FtmPT2/FtmH catalyzes the prenylation of 12,13-dihydroxyfumitre-morgin C in the presence of dimethylallyl diphosphate, resulting in the formation of fumitremorgin B. Fumitremorgin B is further converted to verruculogen by ftmOx1/ftmF via the insertion of an endoperoxide bond between the two prenyl moieties. Finally, verruculogen is further converted to fumitremorgin A by the verruculogen prenyltransferase ftmPT3. The protein is Fumitremorgin C synthase of Neosartorya fischeri (strain ATCC 1020 / DSM 3700 / CBS 544.65 / FGSC A1164 / JCM 1740 / NRRL 181 / WB 181) (Aspergillus fischerianus).